The primary structure comprises 707 residues: G protein-coupled receptor kinase 2 (707 aa).

The tract at residues 1-190 (MADLEAVLAD…ELNMQLTMND (190 aa)) is N-terminal. One can recognise an RGS domain in the interval 54-175 (KFDKIFNQKL…LESDKFTRFC (122 aa)). Residues 191-455 (FSVHRIIGRG…PTEVKEHPFF (265 aa)) form the Protein kinase domain. Residues 197-205 (IGRGGFGEV) and Lys-220 each bind ATP. The active-site Proton acceptor is Asp-318. In terms of domain architecture, AGC-kinase C-terminal spans 456–523 (KDVDWQTVYL…VISERWQNEI (68 aa)). Residues 558-658 (DVIVHGYIKK…WHTSLRTAHK (101 aa)) enclose the PH domain.

Belongs to the protein kinase superfamily. AGC Ser/Thr protein kinase family. GPRK subfamily. As to quaternary structure, interacts with amx-2; the interaction promotes phosphorylation of amx-2. As to expression, expressed in many neurons in the adult including the ASH neurons and other sensory neurons, many interneurons, and motor neurons of the ventral nerve cord. Expressed broadly in head neurons and is detected in several head acetylcholine neurons including the AVA, AVB, AVD and AVE premotor interneurons, the SMD and RMD head motor neurons, and the AIN, AIY, SIA, SIB and SAA interneurons. Expressed in HSN motor neurons and VC4/VC5 motor neurons. Also expressed in vulval muscle cells. Expressed in premotor and RIS interneurons. Expressed in ciliated neurons such as AWA, AWB, AWC, ASH and ADF olfactory and nociceptive neurons, and in chemosensory ASH neurons. Expressed in RMG neurons and AVK interneurons.

It catalyses the reaction [G-protein-coupled receptor] + ATP = [G-protein-coupled receptor]-phosphate + ADP + H(+). Specifically phosphorylates the activated forms of G protein-coupled receptors. Required in adult sensory neurons for chemotaxis. Plays a role in the ASH sensory neurons in the chemotaxis response to NaCl where it is likely to modulate the strength of the NaCl avoidance response which occurs at high NaCl concentrations. Required in the HSN motor neurons for normal egg laying by promoting phosphorylation of amine oxidase amx-2 which inhibits amx-2 activity, preventing metabolism of serotonin. Acts in head acetylcholine neurons to positively regulate locomotion. Inactivates dopamine receptor dop-3 which leads to inactivation of guanine nucleotide-binding protein G(o) subunit goa-1 and activation of the unc-77/nca-1 and nca-2 ion channel proteins. Acts as a positive regulator of swimming by inactivating two dopamine receptors, dop-3 in the premotor interneurons that negatively controls early swimming through the nca ion channel, and dop-1 in the RIS neuron that inhibits late-stage swimming via the signaling of FMRFamide-like neuropeptide flp-11. Controls movement quiescence by negatively regulating multiple targets including egl-4 in ciliated neurons, the level of ligands of the neuropeptide receptor npr-1 in RMG neurons, and the secretion of flp-1 from AVK interneurons. The sequence is that of G protein-coupled receptor kinase 2 (grk-2) from Caenorhabditis elegans.